We begin with the raw amino-acid sequence, 730 residues long: DNA ligase (730 aa).

Positions Met-1–Leu-23 are disordered. NAD(+)-binding positions include Asp-44–Asp-48, Ser-93–Leu-94, and Glu-124. Residue Lys-126 is the N6-AMP-lysine intermediate of the active site. NAD(+)-binding residues include Arg-147, Glu-184, Lys-300, and Lys-324. Zn(2+) is bound by residues Cys-418, Cys-421, Cys-437, and Cys-443. A BRCT domain is found at Glu-638–Pro-727.

It belongs to the NAD-dependent DNA ligase family. LigA subfamily. Requires Mg(2+) as cofactor. Mn(2+) is required as a cofactor.

It catalyses the reaction NAD(+) + (deoxyribonucleotide)n-3'-hydroxyl + 5'-phospho-(deoxyribonucleotide)m = (deoxyribonucleotide)n+m + AMP + beta-nicotinamide D-nucleotide.. Functionally, DNA ligase that catalyzes the formation of phosphodiester linkages between 5'-phosphoryl and 3'-hydroxyl groups in double-stranded DNA using NAD as a coenzyme and as the energy source for the reaction. It is essential for DNA replication and repair of damaged DNA. The chain is DNA ligase from Streptomyces avermitilis (strain ATCC 31267 / DSM 46492 / JCM 5070 / NBRC 14893 / NCIMB 12804 / NRRL 8165 / MA-4680).